The following is a 221-amino-acid chain: 21 kDa seed protein (221 aa).

A signal peptide spans 1–26 (MKTATAVVLLLFAFTSKSYFFGVANA). A disulfide bond links Cys-69 and Cys-116.

Belongs to the protease inhibitor I3 (leguminous Kunitz-type inhibitor) family.

The protein is 21 kDa seed protein (ASP) of Theobroma cacao (Cacao).